The following is a 37-amino-acid chain: Large ribosomal subunit protein bL36 (37 aa).

The protein belongs to the bacterial ribosomal protein bL36 family.

The polypeptide is Large ribosomal subunit protein bL36 (Heliobacterium modesticaldum (strain ATCC 51547 / Ice1)).